The sequence spans 206 residues: Max dimerization protein 3 (206 aa).

Residues 8–25 (IQVLLQAAEFLERREREA) are interaction with SIN3A and SIN3B. Disordered stretches follow at residues 25–67 (AEHG…ELEK) and 146–171 (RERLRADSLDSSGLSSERSDSDQEEL). The 53-residue stretch at 57–109 (SGRSVHNELEKRRRAQLKRCLERLKQQMPLGADCARYTTLSLLRRARMHIQKL) folds into the bHLH domain.

Efficient DNA binding requires dimerization with another bHLH protein. Binds DNA as a heterodimer with MAX. Interacts with SIN3A AND SIN3B. Interacts with RNF17.

It localises to the nucleus. Its function is as follows. Transcriptional repressor. Binds with MAX to form a sequence-specific DNA-binding protein complex which recognizes the core sequence 5'-CAC[GA]TG-3'. Antagonizes MYC transcriptional activity by competing for MAX and suppresses MYC dependent cell transformation. The polypeptide is Max dimerization protein 3 (MXD3) (Homo sapiens (Human)).